Reading from the N-terminus, the 724-residue chain is Phosphoribosylformylglycinamidine synthase subunit PurL (724 aa).

Histidine 46 is an active-site residue. ATP-binding residues include tyrosine 49 and lysine 88. Residue glutamate 90 participates in Mg(2+) binding. Substrate contacts are provided by residues 91-94 (SHNH) and arginine 113. Histidine 92 serves as the catalytic Proton acceptor. Aspartate 114 provides a ligand contact to Mg(2+). Substrate is bound at residue glutamine 237. Aspartate 265 lines the Mg(2+) pocket. Position 309–311 (309–311 (ESQ)) interacts with substrate. Aspartate 489 and glycine 526 together coordinate ATP. Asparagine 527 is a Mg(2+) binding site. Serine 529 is a substrate binding site.

The protein belongs to the FGAMS family. In terms of assembly, monomer. Part of the FGAM synthase complex composed of 1 PurL, 1 PurQ and 2 PurS subunits.

It is found in the cytoplasm. It carries out the reaction N(2)-formyl-N(1)-(5-phospho-beta-D-ribosyl)glycinamide + L-glutamine + ATP + H2O = 2-formamido-N(1)-(5-O-phospho-beta-D-ribosyl)acetamidine + L-glutamate + ADP + phosphate + H(+). The protein operates within purine metabolism; IMP biosynthesis via de novo pathway; 5-amino-1-(5-phospho-D-ribosyl)imidazole from N(2)-formyl-N(1)-(5-phospho-D-ribosyl)glycinamide: step 1/2. Its function is as follows. Part of the phosphoribosylformylglycinamidine synthase complex involved in the purines biosynthetic pathway. Catalyzes the ATP-dependent conversion of formylglycinamide ribonucleotide (FGAR) and glutamine to yield formylglycinamidine ribonucleotide (FGAM) and glutamate. The FGAM synthase complex is composed of three subunits. PurQ produces an ammonia molecule by converting glutamine to glutamate. PurL transfers the ammonia molecule to FGAR to form FGAM in an ATP-dependent manner. PurS interacts with PurQ and PurL and is thought to assist in the transfer of the ammonia molecule from PurQ to PurL. The protein is Phosphoribosylformylglycinamidine synthase subunit PurL of Granulibacter bethesdensis (strain ATCC BAA-1260 / CGDNIH1).